We begin with the raw amino-acid sequence, 199 residues long: MENEFQDGKTEVIEAWYMDDSEEDQRLPHHREPKEFIHVDKLTELGVISWRLNPDNWENCENLKRIREARGYSYVDICDVCPEKLPNYETKIKSFFEEHLHTDEEIRYCLEGSGYFDVRDQNDQWIRIALKKGGMIVLPAGMYHRFTLDTDNYIKAMRLFVGDPVWTPYNRPHDHLPARKEFLAKLLKSEGENQAVEGF.

Histidine 99, histidine 101, glutamate 105, and histidine 144 together coordinate Fe(2+). Histidine 99, histidine 101, glutamate 105, and histidine 144 together coordinate Ni(2+).

It belongs to the acireductone dioxygenase (ARD) family. The cofactor is Fe(2+). It depends on Ni(2+) as a cofactor.

The protein localises to the cytoplasm. It is found in the nucleus. The enzyme catalyses 1,2-dihydroxy-5-(methylsulfanyl)pent-1-en-3-one + O2 = 4-methylsulfanyl-2-oxobutanoate + formate + 2 H(+). It carries out the reaction 1,2-dihydroxy-5-(methylsulfanyl)pent-1-en-3-one + O2 = 3-(methylsulfanyl)propanoate + CO + formate + 2 H(+). It participates in amino-acid biosynthesis; L-methionine biosynthesis via salvage pathway; L-methionine from S-methyl-5-thio-alpha-D-ribose 1-phosphate: step 5/6. Catalyzes 2 different reactions between oxygen and the acireductone 1,2-dihydroxy-3-keto-5-methylthiopentene (DHK-MTPene) depending upon the metal bound in the active site. Fe-containing acireductone dioxygenase (Fe-ARD) produces formate and 2-keto-4-methylthiobutyrate (KMTB), the alpha-ketoacid precursor of methionine in the methionine recycle pathway. Ni-containing acireductone dioxygenase (Ni-ARD) produces methylthiopropionate, carbon monoxide and formate, and does not lie on the methionine recycle pathway. This chain is Acireductone dioxygenase 1 (ARD1), found in Oryza sativa subsp. indica (Rice).